A 228-amino-acid polypeptide reads, in one-letter code: Cutinase (228 aa).

Positions Met-1–Ala-16 are cleaved as a signal peptide. Cys-49 and Cys-129 are joined by a disulfide. The Nucleophile role is filled by Ser-140. Cys-191 and Cys-198 are oxidised to a cystine. Residue Asp-195 is part of the active site. The Proton donor/acceptor role is filled by His-208.

It belongs to the cutinase family. In terms of processing, the 2 disulfide bonds play a critical role in holding the catalytic residues in juxta-position; reduction of the disulfide bridges results in the complete inactivation of the enzyme.

It localises to the secreted. It catalyses the reaction cutin + H2O = cutin monomers.. Partially inhibited by berberine; higher inhibitory effects are observed with longer chain polyester substrates. Functionally, catalyzes the hydrolysis of complex carboxylic polyesters found in the cell wall of plants. Degrades cutin, a macromolecule that forms the structure of the plant cuticle. Allows pathogenic fungi to penetrate through the cuticular barrier into the host plant during the initial stage of fungal infection. The sequence is that of Cutinase (CUTA) from Colletotrichum truncatum (Anthracnose fungus).